A 508-amino-acid polypeptide reads, in one-letter code: MGLPWYRVHTVVLNDPGRLIAVHLMHTALVSGWAGSMALYELAVFDPSDPVLDPMWRQGMFVIPFMTRIGITKSWGGWSITGDTVSDAGIWSFEGVAAAHITLSGLLFLSAIWHWVYWDLDLFRDERTGKPSLDLPKIFGIHLFLSGVLCFGFGAFHITGLFGPGIWISDPYGLTGKVQPVDPAWGAEGFDPFIPGGIASHHIAAGILGILAGLFHLSVRPPQRLYKALRMGNVETVLSSSIAAVFFAAFVVSGTMWYGSATTPIELFGPTRYQWDQGYFQQEIDRRIRASRAEGLSLSEAWSRIPEKLAFYDYIGNNPAKGGLFRAGAMDNGDGIAIGWLGHAAFKDKEGHELFVRRMPTFFETFPVVLVDEEGIVRADAPFRRAESKYSVEQVGVTVEFYGGELNGVGFNDPSTVKKYARRAQLGEIFEFDRATLKSDGVFRSSPRGWFTFGHATFALIFFFGHIWHGARTLFRDVFAGIDPDLDAQVEFGAFQKLGDPTTERQGI.

Helical transmembrane passes span 21 to 36, 101 to 115, 140 to 156, 203 to 218, 237 to 252, and 457 to 472; these read AVHL…WAGS, ITLS…IWHW, GIHL…FGAF, IAAG…FHLS, VLSS…AFVV, and TFAL…HGAR.

The protein belongs to the PsbB/PsbC family. PsbB subfamily. As to quaternary structure, PSII is composed of 1 copy each of membrane proteins PsbA, PsbB, PsbC, PsbD, PsbE, PsbF, PsbH, PsbI, PsbJ, PsbK, PsbL, PsbM, PsbT, PsbX, PsbY, PsbZ, Psb30/Ycf12, at least 3 peripheral proteins of the oxygen-evolving complex and a large number of cofactors. It forms dimeric complexes. Binds multiple chlorophylls. PSII binds additional chlorophylls, carotenoids and specific lipids. serves as cofactor.

The protein localises to the plastid. It localises to the chloroplast thylakoid membrane. Functionally, one of the components of the core complex of photosystem II (PSII). It binds chlorophyll and helps catalyze the primary light-induced photochemical processes of PSII. PSII is a light-driven water:plastoquinone oxidoreductase, using light energy to abstract electrons from H(2)O, generating O(2) and a proton gradient subsequently used for ATP formation. The chain is Photosystem II CP47 reaction center protein from Psilotum nudum (Whisk fern).